Consider the following 475-residue polypeptide: Ataxin-10 (475 aa).

Arg-10 is subject to Omega-N-methylarginine. Ser-12 is modified (phosphoserine; by AURKB). Ser-77 bears the Phosphoserine; by PLK1 mark. At Thr-82 the chain carries Phosphothreonine; by PLK1. Ser-430 is modified (phosphoserine).

Belongs to the ataxin-10 family. Homooligomer. Interacts with GNB2. Interacts with IQCB1. Interacts with OGT. In terms of processing, polyubiquitinated. Post-translationally, phosphorylation at Ser-12 by AURKB promotes the association of ATXN10 with PLK1. Phosphorylation at Ser-77 and Thr-82 by PLK1 may play a role in the regulation of cytokinesis and may stimulate the proteasome-mediated degradation of ATXN10. As to expression, expressed in the central nervous system.

The protein resides in the cytoplasm. It localises to the perinuclear region. The protein localises to the midbody. It is found in the cytoskeleton. Its subcellular location is the cilium basal body. The protein resides in the microtubule organizing center. It localises to the centrosome. The protein localises to the centriole. May play a role in the regulation of cytokinesis. May play a role in signaling by stimulating protein glycosylation. Induces neuritogenesis by activating the Ras-MAP kinase pathway and is necessary for the survival of cerebellar neurons. Does not appear to play a major role in ciliogenesis. This is Ataxin-10 (ATXN10) from Homo sapiens (Human).